We begin with the raw amino-acid sequence, 74 residues long: Sec-independent protein translocase protein TatA (74 aa).

A helical membrane pass occupies residues 1–21 (MGGISIWQLLIIVAIVVLLFG). Positions 45–74 (EEPKDAEFKSLDKAENTAQTKKEEKEKEQA) are disordered.

It belongs to the TatA/E family. As to quaternary structure, the Tat system comprises two distinct complexes: a TatABC complex, containing multiple copies of TatA, TatB and TatC subunits, and a separate TatA complex, containing only TatA subunits. Substrates initially bind to the TatABC complex, which probably triggers association of the separate TatA complex to form the active translocon.

Its subcellular location is the cell inner membrane. Part of the twin-arginine translocation (Tat) system that transports large folded proteins containing a characteristic twin-arginine motif in their signal peptide across membranes. TatA could form the protein-conducting channel of the Tat system. The sequence is that of Sec-independent protein translocase protein TatA from Actinobacillus succinogenes (strain ATCC 55618 / DSM 22257 / CCUG 43843 / 130Z).